The primary structure comprises 144 residues: Putative pre-16S rRNA nuclease (144 aa).

Belongs to the YqgF nuclease family.

It localises to the cytoplasm. Functionally, could be a nuclease involved in processing of the 5'-end of pre-16S rRNA. This Ralstonia nicotianae (strain ATCC BAA-1114 / GMI1000) (Ralstonia solanacearum) protein is Putative pre-16S rRNA nuclease.